The primary structure comprises 425 residues: UDP-N-acetylglucosamine 1-carboxyvinyltransferase (425 aa).

22–23 (KN) contributes to the phosphoenolpyruvate binding site. Position 98 (Arg98) interacts with UDP-N-acetyl-alpha-D-glucosamine. Cys122 serves as the catalytic Proton donor. Residue Cys122 is modified to 2-(S-cysteinyl)pyruvic acid O-phosphothioketal. Residues 127–131 (RPVDQ), Asp313, and Ile335 contribute to the UDP-N-acetyl-alpha-D-glucosamine site.

This sequence belongs to the EPSP synthase family. MurA subfamily.

It localises to the cytoplasm. It catalyses the reaction phosphoenolpyruvate + UDP-N-acetyl-alpha-D-glucosamine = UDP-N-acetyl-3-O-(1-carboxyvinyl)-alpha-D-glucosamine + phosphate. It participates in cell wall biogenesis; peptidoglycan biosynthesis. Cell wall formation. Adds enolpyruvyl to UDP-N-acetylglucosamine. The sequence is that of UDP-N-acetylglucosamine 1-carboxyvinyltransferase from Xylella fastidiosa (strain M23).